The primary structure comprises 772 residues: Carnitine O-palmitoyltransferase 1, muscle isoform (772 aa).

Residues 1–47 are Cytoplasmic-facing; it reads MAEAHQAVAFQFTVTPEGVDFRLSREALKHIYLSGINSWKKRLIRIK. The chain crosses the membrane as a helical span at residues 48–73; that stretch reads NGILRGVYPGSPTSWLVVASATAGSS. Residues 74–102 are Mitochondrial intermembrane-facing; the sequence is YYNVDISMGLVNHIQRCLPERYGPYWTPQ. Residues 103–122 traverse the membrane as a helical segment; sequence TRALLSMAVVSTGVWMIGIF. The Cytoplasmic segment spans residues 123 to 772; the sequence is FFRQTLKLLL…DLFQVPKTDS (650 aa). The active-site Proton acceptor is H473. Residue 555-567 coordinates CoA; the sequence is GKGLIKKCRTSPD. (R)-carnitine-binding residues include Y589 and T602.

It belongs to the carnitine/choline acetyltransferase family.

Its subcellular location is the mitochondrion outer membrane. It catalyses the reaction (R)-carnitine + hexadecanoyl-CoA = O-hexadecanoyl-(R)-carnitine + CoA. It participates in lipid metabolism; fatty acid beta-oxidation. In terms of biological role, catalyzes the transfer of the acyl group of long-chain fatty acid-CoA conjugates onto carnitine, an essential step for the mitochondrial uptake of long-chain fatty acids and their subsequent beta-oxidation in the mitochondrion. The polypeptide is Carnitine O-palmitoyltransferase 1, muscle isoform (CPT1B) (Sus scrofa (Pig)).